We begin with the raw amino-acid sequence, 39 residues long: ORF8a protein (39 aa).

An N-terminal signal peptide occupies residues 1-15 (MKLLIVLTCISLCSC). The SARS ORF8 Ig-like domain occupies 16 to 39 (ICTVVQRCASNKPHVLEDPCKVQH).

This is ORF8a protein from Homo sapiens (Human).